A 237-amino-acid chain; its full sequence is Beta-glucanase (237 aa).

The N-terminal stretch at 1–23 (MKKKSCFTLVTTFAFSLIFSVSA) is a signal peptide. The GH16 domain occupies 28–237 (VFWEPLSYFN…EYDWVKYTSN (210 aa)). A disulfide bridge links C55 with C84. E128 acts as the Nucleophile in catalysis. The active-site Proton donor is E132.

This sequence belongs to the glycosyl hydrolase 16 family.

It catalyses the reaction Hydrolysis of (1-&gt;4)-beta-D-glucosidic linkages in beta-D-glucans containing (1-&gt;3)- and (1-&gt;4)-bonds.. The chain is Beta-glucanase from Paenibacillus macerans (Bacillus macerans).